The chain runs to 359 residues: Histidinol-phosphate aminotransferase (359 aa).

At K217 the chain carries N6-(pyridoxal phosphate)lysine.

It belongs to the class-II pyridoxal-phosphate-dependent aminotransferase family. Histidinol-phosphate aminotransferase subfamily. Homodimer. Pyridoxal 5'-phosphate is required as a cofactor.

The enzyme catalyses L-histidinol phosphate + 2-oxoglutarate = 3-(imidazol-4-yl)-2-oxopropyl phosphate + L-glutamate. Its pathway is amino-acid biosynthesis; L-histidine biosynthesis; L-histidine from 5-phospho-alpha-D-ribose 1-diphosphate: step 7/9. The sequence is that of Histidinol-phosphate aminotransferase (hisC) from Salmonella typhimurium (strain LT2 / SGSC1412 / ATCC 700720).